The chain runs to 784 residues: LPS-assembly protein LptD (784 aa).

A signal peptide spans 1-24; the sequence is MKKRIPTLLATMIATALYSQQGLA. Intrachain disulfides connect Cys31–Cys724 and Cys173–Cys725.

This sequence belongs to the LptD family. As to quaternary structure, component of the lipopolysaccharide transport and assembly complex. Interacts with LptE and LptA. Post-translationally, contains two intramolecular disulfide bonds.

It localises to the cell outer membrane. Functionally, together with LptE, is involved in the assembly of lipopolysaccharide (LPS) at the surface of the outer membrane. The protein is LPS-assembly protein LptD of Shigella flexneri serotype 5b (strain 8401).